A 193-amino-acid polypeptide reads, in one-letter code: Cytochrome c biogenesis ATP-binding export protein CcmA (193 aa).

The region spanning 9-191 (LSASGLAILR…AAGFPVTAEV (183 aa)) is the ABC transporter domain. Residue 41–48 (GANGAGKT) coordinates ATP.

The protein belongs to the ABC transporter superfamily. CcmA exporter (TC 3.A.1.107) family. As to quaternary structure, the complex is composed of two ATP-binding proteins (CcmA) and two transmembrane proteins (CcmB).

Its subcellular location is the cell inner membrane. It carries out the reaction heme b(in) + ATP + H2O = heme b(out) + ADP + phosphate + H(+). Its function is as follows. Part of the ABC transporter complex CcmAB involved in the biogenesis of c-type cytochromes; once thought to export heme, this seems not to be the case, but its exact role is uncertain. Responsible for energy coupling to the transport system. This Hyphomonas neptunium (strain ATCC 15444) protein is Cytochrome c biogenesis ATP-binding export protein CcmA.